The following is a 326-amino-acid chain: MSRADEGRLIHLAKKREREKEDIEQQLRKLEEDKEKCRVGITNKFMANYETVEEVVKSKTYGLVSLDDMKNIQKNEISNRDLQVARGDQSSSTQSKDSQEAREKEEHVAKHTQKRFLSFAFDDEEDEEDAAPIIPKKRVGMDPTVDTSFLPDKEREEFLRKKKESLAAEWRVKQDAEKNEEITVAYAYWDGSSHRKNMKIKKGNTISQCLGRAIEALKKEFTELKSCTAENLMFVKEDLIIPHFYTFQDFIVTKAMGKTGPLFVFDSASDVRIRQDAALDYGESHPAKIVLRSWYEKNKHIYPASRWEPFVPSKKYGRNFDDLSDL.

The tract at residues 77–111 is disordered; that stretch reads ISNRDLQVARGDQSSSTQSKDSQEAREKEEHVAKH. A compositionally biased stretch (basic and acidic residues) spans 97 to 109; it reads DSQEAREKEEHVA.

Belongs to the FAM50 family.

The sequence is that of Protein FAM50 homolog from Caenorhabditis elegans.